We begin with the raw amino-acid sequence, 305 residues long: Syntaxin-123 (305 aa).

Met-1 is subject to N-acetylmethionine. Residues 1-278 (MNDLISSSFK…KVLQRNNRKW (278 aa)) lie on the Cytoplasmic side of the membrane. Positions 46–66 (VKEDMKAVDEIHKRLQDANEE) form a coiled coil. One can recognise a t-SNARE coiled-coil homology domain in the interval 206–268 (LSEIQERHDT…MRGTDQLHGA (63 aa)). The helical; Anchor for type IV membrane protein transmembrane segment at 279 to 299 (ACIATILAIVVVIVILFPILF) threads the bilayer. The Vesicular segment spans residues 300-305 (NTLLRP).

The protein belongs to the syntaxin family. In terms of assembly, part of the t-SNARE complex. As to expression, expressed in tips of root hairs.

It localises to the membrane. Functionally, vesicle trafficking protein that functions in the secretory pathway. Acts in coordination with SYP132 to mediate tip-focused membrane trafficking for root hair tip growth. Functions in root hair elongation by forming SNARE complexes with VAMP721,VAMP722 or VAMP724. The protein is Syntaxin-123 of Arabidopsis thaliana (Mouse-ear cress).